Consider the following 575-residue polypeptide: Stage VI sporulation protein D (575 aa).

The interval 159–502 (EELSEPPAHS…ETKEPQTKES (344 aa)) is disordered. Over residues 200-212 (GLREELETEKAES) the composition is skewed to basic and acidic residues. Composition is skewed to acidic residues over residues 229 to 238 (KEEEESEELA) and 249 to 264 (ETEE…EIEI). 3 stretches are compositionally biased toward basic and acidic residues: residues 266-275 (EIVKAKKETA), 283-302 (DVRE…HVGA), and 310-325 (AELH…KEET). Over residues 438–448 (EEEEQEEESFE) the composition is skewed to acidic residues. The span at 449-464 (IEVRKTPSAEEPKEET) shows a compositional bias: basic and acidic residues. Positions 465 to 474 (PFQSFQLPES) are enriched in polar residues. Positions 493-502 (ETKEPQTKES) are enriched in basic and acidic residues. Residues 523–567 (KICIVQQEDTIERLCERYEITSQQLIRMNSLALDDELKAGQILYI) form the LysM domain.

Required for assembly of a normal spore coat. May be a component of the innermost layer of the spore coat that aids in its adherence to the prespore. In Bacillus subtilis (strain 168), this protein is Stage VI sporulation protein D (spoVID).